The sequence spans 265 residues: Shikimate dehydrogenase (NADP(+)) (265 aa).

Shikimate contacts are provided by residues 15–17 (SLS) and Thr-62. The active-site Proton acceptor is Lys-66. Shikimate contacts are provided by Asn-87 and Asp-102. NADP(+)-binding positions include 125–129 (GAGGA), 149–154 (NRTLEK), and Leu-209. Position 211 (Tyr-211) interacts with shikimate. Gly-233 contributes to the NADP(+) binding site.

It belongs to the shikimate dehydrogenase family. In terms of assembly, homodimer.

The enzyme catalyses shikimate + NADP(+) = 3-dehydroshikimate + NADPH + H(+). It functions in the pathway metabolic intermediate biosynthesis; chorismate biosynthesis; chorismate from D-erythrose 4-phosphate and phosphoenolpyruvate: step 4/7. Functionally, involved in the biosynthesis of the chorismate, which leads to the biosynthesis of aromatic amino acids. Catalyzes the reversible NADPH linked reduction of 3-dehydroshikimate (DHSA) to yield shikimate (SA). The protein is Shikimate dehydrogenase (NADP(+)) of Legionella pneumophila (strain Corby).